Here is a 341-residue protein sequence, read N- to C-terminus: Delta(1)-pyrroline-2-carboxylate/Delta(1)-piperideine-2-carboxylate reductase (341 aa).

Ser52 serves as the catalytic Charge relay system. His53 (proton donor) is an active-site residue. Position 57 (Arg57) interacts with substrate. Residue 125 to 129 (HFAAL) participates in NADP(+) binding. Residue Thr165 coordinates substrate. 183 to 185 (DMA) provides a ligand contact to NADP(+). 191 to 192 (HG) contacts substrate. The active-site Charge relay system is the Asp193. Residues 235-236 (HK) and 308-314 (RMPGERR) contribute to the NADP(+) site.

This sequence belongs to the LDH2/MDH2 oxidoreductase family. In terms of assembly, homodimer.

The catalysed reaction is L-pipecolate + NADP(+) = Delta(1)-piperideine-2-carboxylate + NADPH + H(+). It catalyses the reaction L-proline + NADP(+) = 1-pyrroline-2-carboxylate + NADPH + H(+). The enzyme catalyses N-methyl-L-alanine + NADP(+) + H2O = methylamine + pyruvate + NADPH + H(+). With respect to regulation, is inhibited by the substrate analog pyrrole-2-carboxylate, but not by N-formylphenylalanine. Its function is as follows. Catalyzes the reduction of both Delta(1)-pyrroline-2-carboxylate (Pyr2C) and Delta(1)-piperideine-2-carboxylate (Pip2C) to L-proline and L-pipecolate, respectively, using NADPH as the electron donor. Can use NADH instead of NADPH, although with much less efficiency. Plays an essential role in the catabolism of D-proline and D-lysine, which allows P.putida to grow on each of these amino-acids as a sole carbon source; D-lysine appears to be catabolized only through the pipecolate pathway. Can also catalyze the reverse oxidation reactions, albeit at a much lower rate. To a lesser extent, is able to catalyze in vitro the NADPH-dependent formation of N-alkyl-L-amino acids from the corresponding alpha-oxo acids and alkylamines, e.g. the formation of N-methylalanine from pyruvate and N-methylamine; cannot use ammonia as substrate for these reductive amination reactions. Shows neither malate dehydrogenase nor lactate dehydrogenase activity. The chain is Delta(1)-pyrroline-2-carboxylate/Delta(1)-piperideine-2-carboxylate reductase from Pseudomonas putida (Arthrobacter siderocapsulatus).